The primary structure comprises 274 residues: MSSASRSLARLAALALAALAAAPLAASAQPKAARGKTEVTWYGHAAFVVTTPGGTVLAIDPWLSNPKAPEPGLAGKLPKVDYILVSHGHFDHVGDAIAIAKRTGAKLITNFDLGSSLVAAGYPKDQAGMDTLGNMGGTIQAGDAAVTMVTAVHSSGFTDEKGTGHPGGNPMGFVIQVKGGPTIYHTGDTDLTQDMKQLPERFGRVDVMLTCIGGHFTMDPKAAAIAVGYVHPRTVVPMHFGTFPAIAGTPDELRAALKGKAEVRVLEPGKPVGF.

This sequence belongs to the UPF0173 family.

This is UPF0173 metal-dependent hydrolase Adeh_1068 from Anaeromyxobacter dehalogenans (strain 2CP-C).